The following is a 264-amino-acid chain: Glutamate racemase (264 aa).

Residues 10–11 and 42–43 each bind substrate; these read DS and YG. The active-site Proton donor/acceptor is C73. 74 to 75 lines the substrate pocket; it reads NT. Residue C183 is the Proton donor/acceptor of the active site. 184 to 185 provides a ligand contact to substrate; the sequence is TH.

The protein belongs to the aspartate/glutamate racemases family.

The enzyme catalyses L-glutamate = D-glutamate. Its pathway is cell wall biogenesis; peptidoglycan biosynthesis. Functionally, provides the (R)-glutamate required for cell wall biosynthesis. In Streptococcus pyogenes serotype M6 (strain ATCC BAA-946 / MGAS10394), this protein is Glutamate racemase.